Consider the following 400-residue polypeptide: Phosphoglycerate kinase (400 aa).

Residues 22–24 (DFN), R38, 61–64 (HLGR), R119, and R152 each bind substrate. ATP-binding positions include K205, G296, E327, and 353–356 (GGDT).

This sequence belongs to the phosphoglycerate kinase family. In terms of assembly, monomer.

Its subcellular location is the cytoplasm. The enzyme catalyses (2R)-3-phosphoglycerate + ATP = (2R)-3-phospho-glyceroyl phosphate + ADP. It functions in the pathway carbohydrate degradation; glycolysis; pyruvate from D-glyceraldehyde 3-phosphate: step 2/5. The sequence is that of Phosphoglycerate kinase from Campylobacter jejuni subsp. doylei (strain ATCC BAA-1458 / RM4099 / 269.97).